The sequence spans 153 residues: Prefoldin subunit alpha (153 aa).

Positions 126-153 are disordered; sequence KRLEQGYRQAPGGSPVPHRHDHEDHDEE. The segment covering 143–153 has biased composition (basic and acidic residues); that stretch reads HRHDHEDHDEE.

The protein belongs to the prefoldin alpha subunit family. In terms of assembly, heterohexamer of two alpha and four beta subunits.

It is found in the cytoplasm. Molecular chaperone capable of stabilizing a range of proteins. Seems to fulfill an ATP-independent, HSP70-like function in archaeal de novo protein folding. The sequence is that of Prefoldin subunit alpha from Methanoregula boonei (strain DSM 21154 / JCM 14090 / 6A8).